The chain runs to 639 residues: DNA primase (639 aa).

A CHC2-type zinc finger spans residues 41 to 65 (CPFHNEKSPSFHVRPNHGHFHCFGC). Positions 262–348 (HQAVVVEGYT…AGQSFVAVAP (87 aa)) constitute a Toprim domain. Mg(2+) is bound by residues glutamate 268, aspartate 319, and aspartate 321. Positions 460–479 (RAAQRPTAGPPTELAVRPDP) are disordered.

The protein belongs to the DnaG primase family. As to quaternary structure, monomer. Interacts with DnaB. The cofactor is Zn(2+). Requires Mg(2+) as cofactor.

It carries out the reaction ssDNA + n NTP = ssDNA/pppN(pN)n-1 hybrid + (n-1) diphosphate.. Its function is as follows. RNA polymerase that catalyzes the synthesis of short RNA molecules used as primers for DNA polymerase during DNA replication. This Mycobacterium bovis (strain ATCC BAA-935 / AF2122/97) protein is DNA primase.